A 344-amino-acid chain; its full sequence is Anthranilate phosphoribosyltransferase (344 aa).

5-phospho-alpha-D-ribose 1-diphosphate is bound by residues Gly-81, 84 to 85, Ser-89, 91 to 94, 109 to 117, and Ala-121; these read GD, NIST, and KHGNRALSS. Position 81 (Gly-81) interacts with anthranilate. A Mg(2+)-binding site is contributed by Ser-93. Asn-112 serves as a coordination point for anthranilate. Arg-167 serves as a coordination point for anthranilate. The Mg(2+) site is built by Asp-226 and Glu-227.

It belongs to the anthranilate phosphoribosyltransferase family. Homodimer. It depends on Mg(2+) as a cofactor.

The catalysed reaction is N-(5-phospho-beta-D-ribosyl)anthranilate + diphosphate = 5-phospho-alpha-D-ribose 1-diphosphate + anthranilate. Its pathway is amino-acid biosynthesis; L-tryptophan biosynthesis; L-tryptophan from chorismate: step 2/5. Catalyzes the transfer of the phosphoribosyl group of 5-phosphorylribose-1-pyrophosphate (PRPP) to anthranilate to yield N-(5'-phosphoribosyl)-anthranilate (PRA). This Xanthobacter autotrophicus (strain ATCC BAA-1158 / Py2) protein is Anthranilate phosphoribosyltransferase.